Consider the following 486-residue polypeptide: Cytosol aminopeptidase (486 aa).

Residues Lys249 and Asp254 each coordinate Zn(2+). Residue Lys261 is part of the active site. 3 residues coordinate Zn(2+): Asp272, Asp331, and Glu333. Residue Arg335 is part of the active site.

This sequence belongs to the peptidase M17 family. Homohexamer. Zn(2+) is required as a cofactor.

Its subcellular location is the cytoplasm. It carries out the reaction Release of an N-terminal amino acid, Xaa-|-Yaa-, in which Xaa is preferably Leu, but may be other amino acids including Pro although not Arg or Lys, and Yaa may be Pro. Amino acid amides and methyl esters are also readily hydrolyzed, but rates on arylamides are exceedingly low.. The enzyme catalyses Release of N-terminal proline from a peptide.. Its function is as follows. Presumably involved in the processing and regular turnover of intracellular proteins. Catalyzes the removal of unsubstituted N-terminal amino acids from various peptides. The sequence is that of Cytosol aminopeptidase from Encephalitozoon cuniculi (strain GB-M1) (Microsporidian parasite).